We begin with the raw amino-acid sequence, 140 residues long: Nucleoside diphosphate kinase (140 aa).

Lysine 11, phenylalanine 59, arginine 87, threonine 93, arginine 104, and asparagine 114 together coordinate ATP. The active-site Pros-phosphohistidine intermediate is histidine 117.

This sequence belongs to the NDK family. Mg(2+) serves as cofactor.

The protein localises to the cytoplasm. It catalyses the reaction a 2'-deoxyribonucleoside 5'-diphosphate + ATP = a 2'-deoxyribonucleoside 5'-triphosphate + ADP. It carries out the reaction a ribonucleoside 5'-diphosphate + ATP = a ribonucleoside 5'-triphosphate + ADP. Major role in the synthesis of nucleoside triphosphates other than ATP. The ATP gamma phosphate is transferred to the NDP beta phosphate via a ping-pong mechanism, using a phosphorylated active-site intermediate. This Metallosphaera sedula (strain ATCC 51363 / DSM 5348 / JCM 9185 / NBRC 15509 / TH2) protein is Nucleoside diphosphate kinase.